Here is a 214-residue protein sequence, read N- to C-terminus: Imidazole glycerol phosphate synthase subunit HisH 2 (214 aa).

One can recognise a Glutamine amidotransferase type-1 domain in the interval 2–210; that stretch reads KIVIIDYDMG…LDWVKIQKLG (209 aa). Residue Cys-82 is the Nucleophile of the active site. Active-site residues include His-185 and Glu-187.

Heterodimer of HisH and HisF.

It is found in the cytoplasm. The catalysed reaction is 5-[(5-phospho-1-deoxy-D-ribulos-1-ylimino)methylamino]-1-(5-phospho-beta-D-ribosyl)imidazole-4-carboxamide + L-glutamine = D-erythro-1-(imidazol-4-yl)glycerol 3-phosphate + 5-amino-1-(5-phospho-beta-D-ribosyl)imidazole-4-carboxamide + L-glutamate + H(+). It catalyses the reaction L-glutamine + H2O = L-glutamate + NH4(+). It functions in the pathway amino-acid biosynthesis; L-histidine biosynthesis; L-histidine from 5-phospho-alpha-D-ribose 1-diphosphate: step 5/9. Its function is as follows. IGPS catalyzes the conversion of PRFAR and glutamine to IGP, AICAR and glutamate. The HisH subunit provides the glutamine amidotransferase activity that produces the ammonia necessary to HisF for the synthesis of IGP and AICAR. The polypeptide is Imidazole glycerol phosphate synthase subunit HisH 2 (hisH2) (Vibrio vulnificus (strain YJ016)).